A 110-amino-acid polypeptide reads, in one-letter code: MFELKTLFLFLATALAEIVGCYLPYLWLKRDGSAWLLVPAAASLALFAWLLTLHPTDAGRTYAAYGGVYVSVAVLWLWAVDGVRPTAWDMAGSLLALTGMAIIMFGPRHA.

A run of 4 helical transmembrane segments spans residues 7 to 27 (LFLF…PYLW), 33 to 53 (SAWL…LLTL), 63 to 83 (AAYG…VDGV), and 87 to 107 (AWDM…MFGP).

Belongs to the UPF0060 family.

The protein resides in the cell inner membrane. The polypeptide is UPF0060 membrane protein Nmul_A0351 (Nitrosospira multiformis (strain ATCC 25196 / NCIMB 11849 / C 71)).